Here is a 209-residue protein sequence, read N- to C-terminus: Ribonuclease HII (209 aa).

The RNase H type-2 domain maps to 20–209 (QLEIGIDEVG…KSFLTKLNLI (190 aa)). Positions 26, 27, and 122 each coordinate a divalent metal cation.

The protein belongs to the RNase HII family. The cofactor is Mn(2+). It depends on Mg(2+) as a cofactor.

Its subcellular location is the cytoplasm. The catalysed reaction is Endonucleolytic cleavage to 5'-phosphomonoester.. Its function is as follows. Endonuclease that specifically degrades the RNA of RNA-DNA hybrids. The polypeptide is Ribonuclease HII (Prochlorococcus marinus (strain MIT 9515)).